A 428-amino-acid polypeptide reads, in one-letter code: Chaperone SurA (428 aa).

Residues 1 to 20 (MKNWKTLLLGIAMIANTSFA) form the signal peptide. PpiC domains are found at residues 171 to 272 (STEL…KVND) and 282 to 382 (VTEV…ELLD).

It localises to the periplasm. The enzyme catalyses [protein]-peptidylproline (omega=180) = [protein]-peptidylproline (omega=0). Functionally, chaperone involved in the correct folding and assembly of outer membrane proteins. Recognizes specific patterns of aromatic residues and the orientation of their side chains, which are found more frequently in integral outer membrane proteins. May act in both early periplasmic and late outer membrane-associated steps of protein maturation. This Shigella dysenteriae serotype 1 (strain Sd197) protein is Chaperone SurA.